Consider the following 108-residue polypeptide: UPF0102 protein Sputcn32_3693 (108 aa).

It belongs to the UPF0102 family.

This chain is UPF0102 protein Sputcn32_3693, found in Shewanella putrefaciens (strain CN-32 / ATCC BAA-453).